A 270-amino-acid chain; its full sequence is MDTINQRIGEMLARVRATRPLIHHITNLVVMNDTANVTLHVGGLPVMAHDVEEVAEMVTHAGALVLNVGTLSPDWVESMLVAGRQANELDIPIVLDPVGAGATQLRTMTNLKLLRSLHIGVVRGNGGEIGALSGAGGEMRGVESIAAPENPLTAARTLAQTYRTVVALTGARDIITDGERGFIVSNGHIWLTTLTGTGCMATTMVAAFAAVERDYLLAAAGGLAMFGLAAELAAEKAHGPASFKTALFDQIYNLTPEQVAAGARIAELEW.

Met-47 lines the substrate pocket. ATP-binding residues include Arg-123 and Thr-169. Gly-196 contributes to the substrate binding site.

It belongs to the Thz kinase family. Mg(2+) is required as a cofactor.

The catalysed reaction is 5-(2-hydroxyethyl)-4-methylthiazole + ATP = 4-methyl-5-(2-phosphooxyethyl)-thiazole + ADP + H(+). Its pathway is cofactor biosynthesis; thiamine diphosphate biosynthesis; 4-methyl-5-(2-phosphoethyl)-thiazole from 5-(2-hydroxyethyl)-4-methylthiazole: step 1/1. Catalyzes the phosphorylation of the hydroxyl group of 4-methyl-5-beta-hydroxyethylthiazole (THZ). In Roseiflexus castenholzii (strain DSM 13941 / HLO8), this protein is Hydroxyethylthiazole kinase.